A 372-amino-acid chain; its full sequence is sn-glycerol-3-phosphate import ATP-binding protein UgpC (372 aa).

Positions 2–233 constitute an ABC transporter domain; that stretch reads LDIQQLVKTY…PASTFVASFI (232 aa). 35 to 42 contributes to the ATP binding site; the sequence is GPSGCGKS.

Belongs to the ABC transporter superfamily. sn-glycerol-3-phosphate importer (TC 3.A.1.1.3) family. In terms of assembly, the complex is composed of two ATP-binding proteins (UgpC), two transmembrane proteins (UgpA and UgpE) and a solute-binding protein (UgpB).

It is found in the cell inner membrane. The enzyme catalyses sn-glycerol 3-phosphate(out) + ATP + H2O = sn-glycerol 3-phosphate(in) + ADP + phosphate + H(+). Functionally, part of the ABC transporter complex UgpBAEC involved in sn-glycerol-3-phosphate (G3P) import. Responsible for energy coupling to the transport system. The protein is sn-glycerol-3-phosphate import ATP-binding protein UgpC of Vibrio vulnificus (strain YJ016).